A 128-amino-acid chain; its full sequence is Fluoride-specific ion channel FluC 2 (128 aa).

4 consecutive transmembrane segments (helical) span residues 13–35 (ALVA…AIAG), 40–59 (LAAN…EAAA), 71–93 (LLGT…TAGL), and 97–119 (WMAA…GRAI).

This sequence belongs to the fluoride channel Fluc/FEX (TC 1.A.43) family.

It localises to the cell membrane. The catalysed reaction is fluoride(in) = fluoride(out). Functionally, fluoride-specific ion channel. Important for reducing fluoride concentration in the cell, thus reducing its toxicity. This is Fluoride-specific ion channel FluC 2 from Halobacterium salinarum (strain ATCC 700922 / JCM 11081 / NRC-1) (Halobacterium halobium).